The following is a 445-amino-acid chain: Phosphoglucosamine mutase (445 aa).

Ser102 functions as the Phosphoserine intermediate in the catalytic mechanism. Mg(2+) contacts are provided by Ser102, Asp241, Asp243, and Asp245. Ser102 bears the Phosphoserine mark.

The protein belongs to the phosphohexose mutase family. Mg(2+) serves as cofactor. Post-translationally, activated by phosphorylation.

The catalysed reaction is alpha-D-glucosamine 1-phosphate = D-glucosamine 6-phosphate. Its function is as follows. Catalyzes the conversion of glucosamine-6-phosphate to glucosamine-1-phosphate. This chain is Phosphoglucosamine mutase, found in Haemophilus influenzae (strain ATCC 51907 / DSM 11121 / KW20 / Rd).